A 72-amino-acid polypeptide reads, in one-letter code: Small ribosomal subunit protein bS18 (72 aa).

Belongs to the bacterial ribosomal protein bS18 family. Part of the 30S ribosomal subunit. Forms a tight heterodimer with protein bS6.

Binds as a heterodimer with protein bS6 to the central domain of the 16S rRNA, where it helps stabilize the platform of the 30S subunit. This is Small ribosomal subunit protein bS18 from Aquifex aeolicus (strain VF5).